Here is a 243-residue protein sequence, read N- to C-terminus: CTD nuclear envelope phosphatase 1 homolog (243 aa).

Residues 11 to 27 (ALLLLLSKVWTCICFMF) traverse the membrane as a helical segment. The FCP1 homology domain maps to 56 to 223 (SLVQRKTLVL…LSLLPMLDAL (168 aa)).

It belongs to the dullard family.

It is found in the membrane. It carries out the reaction O-phospho-L-seryl-[protein] + H2O = L-seryl-[protein] + phosphate. The enzyme catalyses O-phospho-L-threonyl-[protein] + H2O = L-threonyl-[protein] + phosphate. Its function is as follows. Serine/threonine protein phosphatase that may dephosphorylate and activate lipin-like phosphatases. Lipins are phosphatidate phosphatases that catalyze the conversion of phosphatidic acid to diacylglycerol and control the metabolism of fatty acids at different levels. May indirectly modulate the lipid composition of nuclear and/or endoplasmic reticulum membranes and be required for proper nuclear membrane morphology and/or dynamics. May also indirectly regulate the production of lipid droplets and triacylglycerol. In Drosophila melanogaster (Fruit fly), this protein is CTD nuclear envelope phosphatase 1 homolog (Dd).